Consider the following 345-residue polypeptide: UDP-3-O-acylglucosamine N-acyltransferase (345 aa).

Histidine 248 (proton acceptor) is an active-site residue.

Belongs to the transferase hexapeptide repeat family. LpxD subfamily. In terms of assembly, homotrimer.

The enzyme catalyses a UDP-3-O-[(3R)-3-hydroxyacyl]-alpha-D-glucosamine + a (3R)-hydroxyacyl-[ACP] = a UDP-2-N,3-O-bis[(3R)-3-hydroxyacyl]-alpha-D-glucosamine + holo-[ACP] + H(+). Its pathway is bacterial outer membrane biogenesis; LPS lipid A biosynthesis. Its function is as follows. Catalyzes the N-acylation of UDP-3-O-acylglucosamine using 3-hydroxyacyl-ACP as the acyl donor. Is involved in the biosynthesis of lipid A, a phosphorylated glycolipid that anchors the lipopolysaccharide to the outer membrane of the cell. This is UDP-3-O-acylglucosamine N-acyltransferase from Trichodesmium erythraeum (strain IMS101).